A 497-amino-acid chain; its full sequence is Glycerol kinase (497 aa).

Residue T11 participates in ADP binding. 3 residues coordinate ATP: T11, S12, and S13. T11 serves as a coordination point for sn-glycerol 3-phosphate. R15 lines the ADP pocket. The sn-glycerol 3-phosphate site is built by R81, E82, Y133, and D242. Glycerol is bound by residues R81, E82, Y133, D242, and Q243. ADP is bound by residues T264 and G307. ATP is bound by residues T264, G307, Q311, and G412. 2 residues coordinate ADP: G412 and N416.

This sequence belongs to the FGGY kinase family.

The enzyme catalyses glycerol + ATP = sn-glycerol 3-phosphate + ADP + H(+). It participates in polyol metabolism; glycerol degradation via glycerol kinase pathway; sn-glycerol 3-phosphate from glycerol: step 1/1. Inhibited by fructose 1,6-bisphosphate (FBP). Key enzyme in the regulation of glycerol uptake and metabolism. Catalyzes the phosphorylation of glycerol to yield sn-glycerol 3-phosphate. The protein is Glycerol kinase of Leptothrix cholodnii (strain ATCC 51168 / LMG 8142 / SP-6) (Leptothrix discophora (strain SP-6)).